The following is a 1404-amino-acid chain: DNA-directed RNA polymerase subunit beta' (1404 aa).

Zn(2+)-binding residues include Cys70, Cys72, Cys85, and Cys88. Residues Asp460, Asp462, and Asp464 each coordinate Mg(2+). Zn(2+)-binding residues include Cys814, Cys888, Cys895, and Cys898.

Belongs to the RNA polymerase beta' chain family. In terms of assembly, the RNAP catalytic core consists of 2 alpha, 1 beta, 1 beta' and 1 omega subunit. When a sigma factor is associated with the core the holoenzyme is formed, which can initiate transcription. Mg(2+) serves as cofactor. Zn(2+) is required as a cofactor.

The catalysed reaction is RNA(n) + a ribonucleoside 5'-triphosphate = RNA(n+1) + diphosphate. DNA-dependent RNA polymerase catalyzes the transcription of DNA into RNA using the four ribonucleoside triphosphates as substrates. The chain is DNA-directed RNA polymerase subunit beta' from Shewanella pealeana (strain ATCC 700345 / ANG-SQ1).